Consider the following 116-residue polypeptide: Protein Rev (116 aa).

A phosphoserine; by host CK2 mark is found at Ser5 and Ser8. The tract at residues 18-26 (LIKFLYQSN) is homomultimerization. The interval 23–49 (YQSNPPPNPEGTRQARRNRRRRWRERQ) is disordered. Positions 34–50 (TRQARRNRRRRWRERQR) match the Nuclear localization signal and RNA-binding (RRE) motif. Basic residues predominate over residues 36-47 (QARRNRRRRWRE). Positions 73 to 84 (LQLPPLERLTLD) match the Nuclear export signal and binding to XPO1 motif. Residues Ser92 and Ser99 each carry the phosphoserine; by host modification. The tract at residues 92-116 (SGTQGVGSPQILVESPTVLESGTKE) is disordered.

Belongs to the HIV-1 REV protein family. Homomultimer; when bound to the RRE. Multimeric assembly is essential for activity and may involve XPO1. Binds to human KPNB1, XPO1, TNPO1, RANBP5 and IPO7. Interacts with the viral Integrase. Interacts with human KHDRBS1. Interacts with human NAP1; this interaction decreases Rev multimerization and stimulates its activity. Interacts with human DEAD-box helicases DDX3 and DDX24; these interactions may serve for viral RNA export to the cytoplasm and packaging, respectively. Interacts with human PSIP1; this interaction may inhibit HIV-1 DNA integration by promoting dissociation of the Integrase-LEDGF/p75 complex. Post-translationally, asymmetrically arginine dimethylated at one site by host PRMT6. Methylation impairs the RNA-binding activity and export of viral RNA from the nucleus to the cytoplasm. In terms of processing, phosphorylated by protein kinase CK2. Presence of, and maybe binding to the N-terminus of the regulatory beta subunit of CK2 is necessary for CK2-mediated Rev's phosphorylation.

The protein localises to the host nucleus. Its subcellular location is the host nucleolus. It is found in the host cytoplasm. Its function is as follows. Escorts unspliced or incompletely spliced viral pre-mRNAs (late transcripts) out of the nucleus of infected cells. These pre-mRNAs carry a recognition sequence called Rev responsive element (RRE) located in the env gene, that is not present in fully spliced viral mRNAs (early transcripts). This function is essential since most viral proteins are translated from unspliced or partially spliced pre-mRNAs which cannot exit the nucleus by the pathway used by fully processed cellular mRNAs. Rev itself is translated from a fully spliced mRNA that readily exits the nucleus. Rev's nuclear localization signal (NLS) binds directly to KPNB1/Importin beta-1 without previous binding to KPNA1/Importin alpha-1. KPNB1 binds to the GDP bound form of RAN (Ran-GDP) and targets Rev to the nucleus. In the nucleus, the conversion from Ran-GDP to Ran-GTP dissociates Rev from KPNB1 and allows Rev's binding to the RRE in viral pre-mRNAs. Rev multimerization on the RRE via cooperative assembly exposes its nuclear export signal (NES) to the surface. Rev can then form a complex with XPO1/CRM1 and Ran-GTP, leading to nuclear export of the complex. Conversion from Ran-GTP to Ran-GDP mediates dissociation of the Rev/RRE/XPO1/RAN complex, so that Rev can return to the nucleus for a subsequent round of export. Beside KPNB1, also seems to interact with TNPO1/Transportin-1, RANBP5/IPO5 and IPO7/RANBP7 for nuclear import. The nucleoporin-like HRB/RIP is an essential cofactor that probably indirectly interacts with Rev to release HIV RNAs from the perinuclear region to the cytoplasm. The chain is Protein Rev from Human immunodeficiency virus type 1 group M subtype B (isolate BRU/LAI) (HIV-1).